We begin with the raw amino-acid sequence, 933 residues long: Myocardin (933 aa).

An MEF2C-binding motif is present at residues 12 to 27 (IRSKFRSVLQLRLQQR). RPEL repeat units lie at residues 18 to 43 (SVLQ…PPLR), 62 to 87 (DTLK…QASS), and 106 to 131 (DDLN…PVDC). The HDAC5-binding stretch occupies residues 153–205 (FEEDSSSDGLSPDQTRSEDLPGSAGSPLDTKAAETPLAGPRGTVQDLTLGSEN). Disordered regions lie at residues 154 to 282 (EEDS…PPPM) and 324 to 365 (NEQM…GPLP). Positions 210-220 (SAPQSGNQSDL) are enriched in polar residues. The span at 248-265 (NRHKKPKDPKPKVKKLKY) shows a compositional bias: basic residues. The span at 330–346 (NPNSSSAPLSSTPLSPA) shows a compositional bias: low complexity. Polar residues predominate over residues 347-357 (KNSFSGQTGVS). Residues 368 to 402 (LDDLKVSELRQQLRIRGLPVSGTKTALMDRLRPFQ) enclose the SAP domain. Residues S445, S449, S453, and S457 each carry the phosphoserine; by GSK3-beta modification. Positions 515–550 (LVEKQKVINELTWKLQQEQRQVEELRMQLQKQKRGT) form a coiled coil. The tract at residues 568 to 613 (DAGSSCPFAPLPRAVKRQSNSSEEQPAAGDAARLRPLGNTHCAESS) is disordered. Phosphoserine; by GSK3-beta is present on residues S621, S625, S629, and S633. Disordered stretches follow at residues 630–672 (PQHS…VSSP) and 760–794 (PKIP…FDHY). Residues 712 to 933 (ITQPPSYEDA…SPMDLHLQQW (222 aa)) are required for interaction with and ubiquitination by STUB1. Phosphoserine; by MAPK1 and MAPK3 occurs at positions 810, 857, and 864. Position 891 is a phosphothreonine; by MAPK1 and MAPK3 (T891).

In terms of assembly, homodimer. Interacts with MLLT7/FOXO4. Interacts with SRF, its association does not depend on specific DNA sequences for ternary complex formation. Interacts (via C-terminal) with EP300 (via the CREB-binding domain). Interacts with HDAC4 and HDAC5. Interacts with MEF2C. Interacts (via C-terminus) with STUB1/CHIP. Interacts with PURB. Ubiquitinated; by STUB1/CHIP at the C-terminus, leading to its degradation by the proteasome. Phosphorylation by GSK3B is required for STUB1/CHIP-mediated ubiquitination. In terms of processing, phosphorylation negatively regulates the intrinsic myocardin transcriptional activity. Phosphorylated; by GSK3B. As to expression, expressed in the heart and in smooth muscle cells-containing tissues (aorta, pulmonary vein, lung), but is not detectable in skeletal muscle, liver, kidney and spleen.

The protein resides in the nucleus. Its function is as follows. Smooth muscle cells (SM) and cardiac muscle cells-specific transcriptional factor which uses the canonical single or multiple CArG boxes DNA sequence. Acts as a cofactor of serum response factor (SRF) with the potential to modulate SRF-target genes. Plays a crucial role in cardiogenesis, urinary bladder development, and differentiation of the smooth muscle cell lineage (myogenesis). Positively regulates the transcription of genes involved in vascular smooth muscle contraction. The protein is Myocardin (MYOCD) of Sus scrofa (Pig).